The following is a 362-amino-acid chain: Peptide chain release factor 1 (362 aa).

Gln-238 carries the N5-methylglutamine modification.

It belongs to the prokaryotic/mitochondrial release factor family. In terms of processing, methylated by PrmC. Methylation increases the termination efficiency of RF1.

It is found in the cytoplasm. Functionally, peptide chain release factor 1 directs the termination of translation in response to the peptide chain termination codons UAG and UAA. In Psychrobacter cryohalolentis (strain ATCC BAA-1226 / DSM 17306 / VKM B-2378 / K5), this protein is Peptide chain release factor 1.